Here is a 256-residue protein sequence, read N- to C-terminus: ATP-dependent dethiobiotin synthetase BioD (256 aa).

Position 13–18 (13–18 (EVGKTY)) interacts with ATP. Thr17 serves as a coordination point for Mg(2+). The active site involves Lys38. Ser42 lines the substrate pocket. ATP contacts are provided by residues Asp56, 118-121 (EGAG), and 187-188 (NR). 2 residues coordinate Mg(2+): Asp56 and Glu118.

Belongs to the dethiobiotin synthetase family. As to quaternary structure, homodimer. Requires Mg(2+) as cofactor.

The protein resides in the cytoplasm. It catalyses the reaction (7R,8S)-7,8-diammoniononanoate + CO2 + ATP = (4R,5S)-dethiobiotin + ADP + phosphate + 3 H(+). It functions in the pathway cofactor biosynthesis; biotin biosynthesis; biotin from 7,8-diaminononanoate: step 1/2. In terms of biological role, catalyzes a mechanistically unusual reaction, the ATP-dependent insertion of CO2 between the N7 and N8 nitrogen atoms of 7,8-diaminopelargonic acid (DAPA, also called 7,8-diammoniononanoate) to form a ureido ring. This Rhodopirellula baltica (strain DSM 10527 / NCIMB 13988 / SH1) protein is ATP-dependent dethiobiotin synthetase BioD.